We begin with the raw amino-acid sequence, 557 residues long: Formate--tetrahydrofolate ligase (557 aa).

66 to 73 (TPAGEGKT) contacts ATP.

This sequence belongs to the formate--tetrahydrofolate ligase family.

The catalysed reaction is (6S)-5,6,7,8-tetrahydrofolate + formate + ATP = (6R)-10-formyltetrahydrofolate + ADP + phosphate. The protein operates within one-carbon metabolism; tetrahydrofolate interconversion. This Bartonella tribocorum (strain CIP 105476 / IBS 506) protein is Formate--tetrahydrofolate ligase.